The primary structure comprises 375 residues: Phosphate acyltransferase (375 aa).

Positions 354 to 375 are disordered; it reads AQDDATSADADAPGDSETGSTN. The span at 356–368 shows a compositional bias: low complexity; sequence DDATSADADAPGD.

It belongs to the PlsX family. As to quaternary structure, homodimer. Probably interacts with PlsY.

The protein resides in the cytoplasm. The enzyme catalyses a fatty acyl-[ACP] + phosphate = an acyl phosphate + holo-[ACP]. It participates in lipid metabolism; phospholipid metabolism. Its function is as follows. Catalyzes the reversible formation of acyl-phosphate (acyl-PO(4)) from acyl-[acyl-carrier-protein] (acyl-ACP). This enzyme utilizes acyl-ACP as fatty acyl donor, but not acyl-CoA. The chain is Phosphate acyltransferase from Ruegeria sp. (strain TM1040) (Silicibacter sp.).